A 396-amino-acid chain; its full sequence is Potassium channel subfamily K member 9 (396 aa).

The Cytoplasmic segment spans residues 1-8; the sequence is MKRQNVRT. Residues 9–29 form a helical membrane-spanning segment; the sequence is LSLIACTFTYLLVGAAVFDAL. Over 30–88 the chain is Extracellular; the sequence is ESDHEMREEEKLKAEEVRLRGKYNISSDDYQQLELVILQSEPHRAGVQWKFAGSFYFAI. N-linked (GlcNAc...) asparagine glycosylation occurs at Asn-53. The pore-forming intramembrane region spans 89 to 101; the sequence is TVITTIGYGHAAP. K(+) contacts are provided by Thr-93, Ile-94, Gly-95, and Tyr-96. Residues 93–98 are selectivity filter 1; that stretch reads TIGYGH. Topologically, residues 102 to 107 are extracellular; the sequence is GTDAGK. Residues 108–128 form a helical membrane-spanning segment; it reads AFCMFYAVLGIPLTLVMFQSL. The Cytoplasmic portion of the chain corresponds to 129–158; it reads GERMNTFVRYLLKRIKKCCGMRNTEVSMEN. The chain crosses the membrane as a helical span at residues 159-179; sequence MVTVGFFSCMGTLCLGAAAFS. Residues 180–194 lie on the Extracellular side of the membrane; the sequence is QCEDWSFFHAYYYCF. An intramembrane region (pore-forming) is located at residues 195-207; it reads ITLTTIGFGDFVA. Residues Thr-199, Ile-200, Gly-201, and Phe-202 each contribute to the K(+) site. The selectivity filter 2 stretch occupies residues 199 to 204; that stretch reads TIGFGD. The Extracellular segment spans residues 208–218; sequence LQSKGALQRKP. Residues 219–239 traverse the membrane as a helical segment; it reads FYVAFSFMYILVGLTVIGAFL. At 240 to 396 the chain is on the cytoplasmic side; it reads NLVVLRFLTM…HRLHIRRKSI (157 aa). The segment at 243 to 248 is X-gate; sequence VLRFLT.

It belongs to the two pore domain potassium channel (TC 1.A.1.8) family. In terms of assembly, homodimer. Heterodimer with KCNK1. Heterodimer with KCNK3. Highly expressed in the CNS and at lower levels in the colon, kidney, liver, lung, spleen, stomach and skeletal muscle. The highest expression was found in the olfactory nuclei, piriform cortex, cerebellum, antedorsal thalmic nucleus, pontine nucleus, dorsal raphe and several nuclei in the medulla. Shows a non-homogeneous distribution in the hippocampus. Expressed at highest levels in the lateral posterior and inferior portions and at medium levels in neocortex. Expressed in motoneurons, including hypoglossal motoneurons (at protein level).

The protein localises to the cell membrane. It is found in the mitochondrion inner membrane. The protein resides in the cell projection. Its subcellular location is the dendrite. It carries out the reaction K(+)(in) = K(+)(out). The enzyme catalyses Na(+)(in) = Na(+)(out). Its activity is regulated as follows. Activated by halothane and isoflurane. Inhibited by external acidification, diacylglycerol, anandamide and AGT/angiotensin II. Ruthenium red inhibits homomeric but not KCNK3:KCNK9 heteromeric channels. Functionally, k(+) channel that conducts voltage-dependent outward rectifying currents upon membrane depolarization. Voltage sensing is coupled to K(+) electrochemical gradient in an 'ion flux gating' mode where outward but not inward ion flow opens the gate. Changes ion selectivity and becomes permeable to Na(+) ions in response to extracellular acidification. Protonation of the pH sensor His-98 stabilizes C-type inactivation conformation likely converting the channel from outward K(+)-conducting, to inward Na(+)-conducting to nonconductive state. Homo- and heterodimerizes to form functional channels with distinct regulatory and gating properties. Allows K(+) currents with fast-gating kinetics important for the repolarization and hyperpolarization phases of action potentials. In granule neurons, hyperpolarizes the resting membrane potential to limit intrinsic neuronal excitability, but once the action potential threshold is reached, supports high-frequency action potential firing and increased neuronal excitability. Homomeric and/or heteromeric KCNK3:KCNK9 channels operate in cerebellar granule cells, whereas heteromeric KCNK1:KCNK9 enables currents in hippocampal dentate gyrus granule neurons. Dispensable for central chemosensory respiration i.e. breathing controlled by brainstem CO2/pH, it rather conducts pH-sensitive currents and controls the firing rate of serotonergic raphe neurons involved in potentiation of the respiratory chemoreflex. In retinal ganglion cells, mediates outward rectifying currents that regulate action potentials in response to acidification of the synaptic cleft. Involved in transmission of image-forming and nonimage-forming visual information in the retina. In adrenal gland, contributes to the maintenance of a hyperpolarized resting membrane potential of aldosterone-producing cells at zona glomerulosa and limits aldosterone release as part of a regulatory mechanism that controls arterial blood pressure and electrolyte homeostasis. This is Potassium channel subfamily K member 9 from Rattus norvegicus (Rat).